Consider the following 266-residue polypeptide: Agamous-like MADS-box protein AGL97 (266 aa).

The region spanning 3-63 (GVKRKIAIEK…SNSNAAFYSF (61 aa)) is the MADS-box domain. A coiled-coil region spans residues 88 to 130 (WEDESLLKSENLEELREAMDSMSTMLRDLKELEKQRDHQTQTL).

In terms of assembly, interacts with AGL27 and AGL62.

The protein localises to the nucleus. Putative transcription factor. The sequence is that of Agamous-like MADS-box protein AGL97 (AGL97) from Arabidopsis thaliana (Mouse-ear cress).